Here is a 423-residue protein sequence, read N- to C-terminus: Glutamate-1-semialdehyde 2,1-aminomutase (423 aa).

Lys-262 carries the post-translational modification N6-(pyridoxal phosphate)lysine.

It belongs to the class-III pyridoxal-phosphate-dependent aminotransferase family. HemL subfamily. In terms of assembly, homodimer. It depends on pyridoxal 5'-phosphate as a cofactor.

The protein localises to the cytoplasm. It carries out the reaction (S)-4-amino-5-oxopentanoate = 5-aminolevulinate. Its pathway is porphyrin-containing compound metabolism; protoporphyrin-IX biosynthesis; 5-aminolevulinate from L-glutamyl-tRNA(Glu): step 2/2. This Saccharophagus degradans (strain 2-40 / ATCC 43961 / DSM 17024) protein is Glutamate-1-semialdehyde 2,1-aminomutase.